Here is a 348-residue protein sequence, read N- to C-terminus: Uroporphyrinogen decarboxylase (348 aa).

Substrate contacts are provided by residues 27–31 (RQAGR), phenylalanine 46, aspartate 76, tyrosine 152, serine 207, and histidine 320.

Belongs to the uroporphyrinogen decarboxylase family. In terms of assembly, homodimer.

The protein resides in the cytoplasm. It catalyses the reaction uroporphyrinogen III + 4 H(+) = coproporphyrinogen III + 4 CO2. Its pathway is porphyrin-containing compound metabolism; protoporphyrin-IX biosynthesis; coproporphyrinogen-III from 5-aminolevulinate: step 4/4. Its function is as follows. Catalyzes the decarboxylation of four acetate groups of uroporphyrinogen-III to yield coproporphyrinogen-III. This is Uroporphyrinogen decarboxylase from Bacillus thuringiensis (strain Al Hakam).